The following is a 385-amino-acid chain: Proliferation-associated protein A (385 aa).

It belongs to the peptidase M24 family.

The polypeptide is Proliferation-associated protein A (prlA) (Dictyostelium discoideum (Social amoeba)).